The chain runs to 125 residues: Antitoxin MazE5 (125 aa).

As to quaternary structure, forms a complex with cognate toxin MazF5.

In terms of biological role, antitoxin component of a type II toxin-antitoxin (TA) system. Upon expression in M.smegmatis neutralizes the effect of cognate toxin MazF5. This chain is Antitoxin MazE5 (mazE5), found in Mycobacterium tuberculosis (strain ATCC 25618 / H37Rv).